Here is a 555-residue protein sequence, read N- to C-terminus: Steroid-22-oyl-CoA synthetase (555 aa).

The protein belongs to the ATP-dependent AMP-binding enzyme family.

It catalyses the reaction 3-oxochol-4-en-22-oate + ATP + CoA = 3-oxochol-4-en-22-oyl-CoA + AMP + diphosphate. The enzyme catalyses 3-hydroxy-9-oxo-9,10-seco-chola-1,3,5-trien-22-oate + ATP + CoA = 3-hydroxy-9-oxo-9,10-seco-chola-1,3,5-trien-22-oyl-CoA + AMP + diphosphate. It participates in steroid metabolism. Functionally, involved in cholate catabolism. Catalyzes the ATP-dependent formation of CoA thioesters of steroids with isopropanoyl side chains, likely occurring as degradation intermediates. Can use 4-BNC, HSBNC and HIDP as substrate. In Rhodococcus jostii (strain RHA1), this protein is Steroid-22-oyl-CoA synthetase.